A 263-amino-acid polypeptide reads, in one-letter code: 4-hydroxy-tetrahydrodipicolinate reductase (263 aa).

Residues 7-12, 96-98, and 122-125 each bind NAD(+); these read GFKGRM, GTT, and APNF. His-152 acts as the Proton donor/acceptor in catalysis. (S)-2,3,4,5-tetrahydrodipicolinate is bound at residue His-153. Catalysis depends on Lys-156, which acts as the Proton donor. Residue 162 to 163 participates in (S)-2,3,4,5-tetrahydrodipicolinate binding; that stretch reads GT.

It belongs to the DapB family.

It is found in the cytoplasm. It carries out the reaction (S)-2,3,4,5-tetrahydrodipicolinate + NAD(+) + H2O = (2S,4S)-4-hydroxy-2,3,4,5-tetrahydrodipicolinate + NADH + H(+). The enzyme catalyses (S)-2,3,4,5-tetrahydrodipicolinate + NADP(+) + H2O = (2S,4S)-4-hydroxy-2,3,4,5-tetrahydrodipicolinate + NADPH + H(+). The protein operates within amino-acid biosynthesis; L-lysine biosynthesis via DAP pathway; (S)-tetrahydrodipicolinate from L-aspartate: step 4/4. Its function is as follows. Catalyzes the conversion of 4-hydroxy-tetrahydrodipicolinate (HTPA) to tetrahydrodipicolinate. The polypeptide is 4-hydroxy-tetrahydrodipicolinate reductase (Listeria monocytogenes serotype 4b (strain F2365)).